Here is a 410-residue protein sequence, read N- to C-terminus: Dual-specificity RNA methyltransferase RlmN (410 aa).

The active-site Proton acceptor is the E123. In terms of domain architecture, Radical SAM core spans 129–378 (EEGRGTLCIS…IRTPRGRDIL (250 aa)). Residues C136 and C381 are joined by a disulfide bond. [4Fe-4S] cluster contacts are provided by C143, C147, and C150. Residues 207–208 (GE), S239, 261–263 (SLH), and N338 each bind S-adenosyl-L-methionine. C381 serves as the catalytic S-methylcysteine intermediate.

This sequence belongs to the radical SAM superfamily. RlmN family. [4Fe-4S] cluster serves as cofactor.

Its subcellular location is the cytoplasm. The enzyme catalyses adenosine(2503) in 23S rRNA + 2 reduced [2Fe-2S]-[ferredoxin] + 2 S-adenosyl-L-methionine = 2-methyladenosine(2503) in 23S rRNA + 5'-deoxyadenosine + L-methionine + 2 oxidized [2Fe-2S]-[ferredoxin] + S-adenosyl-L-homocysteine. It carries out the reaction adenosine(37) in tRNA + 2 reduced [2Fe-2S]-[ferredoxin] + 2 S-adenosyl-L-methionine = 2-methyladenosine(37) in tRNA + 5'-deoxyadenosine + L-methionine + 2 oxidized [2Fe-2S]-[ferredoxin] + S-adenosyl-L-homocysteine. In terms of biological role, specifically methylates position 2 of adenine 2503 in 23S rRNA and position 2 of adenine 37 in tRNAs. m2A2503 modification seems to play a crucial role in the proofreading step occurring at the peptidyl transferase center and thus would serve to optimize ribosomal fidelity. The polypeptide is Dual-specificity RNA methyltransferase RlmN (Mesorhizobium japonicum (strain LMG 29417 / CECT 9101 / MAFF 303099) (Mesorhizobium loti (strain MAFF 303099))).